Reading from the N-terminus, the 195-residue chain is Thymidine kinase (195 aa).

ATP is bound by residues 9 to 16 (STMNAGKS) and 87 to 90 (DEAQ). Catalysis depends on Glu88, which acts as the Proton acceptor. Residues Cys145, Cys147, Cys182, and His185 each contribute to the Zn(2+) site.

The protein belongs to the thymidine kinase family. Homotetramer.

The protein resides in the cytoplasm. It carries out the reaction thymidine + ATP = dTMP + ADP + H(+). This Jannaschia sp. (strain CCS1) protein is Thymidine kinase.